The primary structure comprises 141 residues: Large ribosomal subunit protein uL11c (141 aa).

It belongs to the universal ribosomal protein uL11 family. As to quaternary structure, part of the ribosomal stalk of the 50S ribosomal subunit. Interacts with L10 and the large rRNA to form the base of the stalk. L10 forms an elongated spine to which L12 dimers bind in a sequential fashion forming a multimeric L10(L12)X complex.

The protein localises to the plastid. It is found in the chloroplast. Its function is as follows. Forms part of the ribosomal stalk which helps the ribosome interact with GTP-bound translation factors. This is Large ribosomal subunit protein uL11c from Thalassiosira pseudonana (Marine diatom).